Reading from the N-terminus, the 1034-residue chain is Protein ITPRID1 (1034 aa).

3 disordered regions span residues 223 to 290 (KTQQ…PTKP), 442 to 486 (QVSS…KSMT), and 624 to 678 (QSSL…SSWS). Composition is skewed to polar residues over residues 443–453 (VSSMTGSQSPT) and 465–476 (HSPASQQDSLQE). The segment covering 477–486 (SYGSKSKSMT) has biased composition (low complexity). Residues 669 to 678 (TDSNAASSWS) show a composition bias toward polar residues. A coiled-coil region spans residues 843–902 (EMETMKMVCQSFREHLEEIEQHFMGQQALYPRDMSEEEREEAEYLRTLREALRQQVAELA).

The polypeptide is Protein ITPRID1 (Itprid1) (Mus musculus (Mouse)).